The sequence spans 373 residues: Dimethylallyltryptophan synthase CymD (373 aa).

Residues aspartate 55, valine 56, and glutamate 64 each contribute to the L-tryptophan site. Catalysis depends on glutamate 64, which acts as the Nucleophile. Dimethylallyl diphosphate-binding residues include glutamine 77, lysine 146, tryptophan 148, arginine 205, and lysine 207. Residue arginine 211 coordinates L-tryptophan. Tyrosine 274 is a dimethylallyl diphosphate binding site. Tyrosine 326 contributes to the L-tryptophan binding site. 3 residues coordinate dimethylallyl diphosphate: arginine 337, lysine 339, and tyrosine 341. One can recognise a FtsK domain in the interval 346–373 (MHDVTPPPLGVSQQHHLSGQTTARGRTE).

In terms of biological role, dimethylallyltryptophan synthase; part of the gene cluster that mediates the biosynthesis of cyclic heptapeptides, known as cyclomarins and also of cyclic dipeptides, called cyclomarazines, which have both antimicrobial and cytotoxic effects. Catalyzes the reverse N-prenylation of monomeric L-tryptophan with dimethylallyl diphosphate (DMAPP) to form N-(1,1-dimethylallyl)-tryptophan (r-N-DMAT). The formation of r-N-DMAT appears to proceed via the deprotonation of the indole nitrogen of tryptophan, which facilitates a nucleophilic attack on the carbocation that is forming on the dimethylallyl group as the diphosphate dissociates. The N-(1,1-dimethylallyl)-tryptophan produced by CymD is combined with a range of standard and nonproteinogenic amino acid substrates to synthesize the peptides, a process that is probably catalyzed by the non-canonical nonribosomal peptide synthetase (NRPS), CymA. Other proteins in the cluster catalyze further modifications of the peptides including CymV which catalyzes the oxidation of olefinic cyclomarins and cyclomarazines to their respective epoxide derivatives. Utilizes only DMAPP as the prenyl donor and has no requirement for divalent cations. The protein is Dimethylallyltryptophan synthase CymD of Salinispora arenicola (strain CNS-205).